The sequence spans 507 residues: Carboxypeptidase sxa2 (507 aa).

An N-terminal signal peptide occupies residues 1–22 (MLSLFLKSLFAIIIIELTIIHA). 2 N-linked (GlcNAc...) asparagine glycosylation sites follow: asparagine 38 and asparagine 45. The tract at residues 41 to 64 (SASSNQTVQPRQHAAPSSDRIKSL) is disordered. Residue serine 200 is part of the active site. N-linked (GlcNAc...) asparagine glycans are attached at residues asparagine 259, asparagine 260, and asparagine 300. Aspartate 434 is a catalytic residue. Asparagine 448 is a glycosylation site (N-linked (GlcNAc...) asparagine). Histidine 487 is a catalytic residue.

The protein belongs to the peptidase S10 family.

Its subcellular location is the secreted. Involved in degradation or processing of the mating pheromones. Its loss causes a persistent response to the pheromones. It may be required for stabilization of enzymes that are essential for zygote formation. May degrade the mating pheromone P-factor. The chain is Carboxypeptidase sxa2 (sxa2) from Schizosaccharomyces pombe (strain 972 / ATCC 24843) (Fission yeast).